The sequence spans 212 residues: Thymidylate kinase (212 aa).

Position 11 to 18 (11 to 18) interacts with ATP; sequence GPEGAGKT.

It belongs to the thymidylate kinase family.

It carries out the reaction dTMP + ATP = dTDP + ADP. In terms of biological role, phosphorylation of dTMP to form dTDP in both de novo and salvage pathways of dTTP synthesis. This is Thymidylate kinase from Streptococcus pneumoniae (strain Hungary19A-6).